A 447-amino-acid chain; its full sequence is DILAAFRVTPQPGVPPEEAGAAVAXESSTGTWTTVWTDGLTSLDRYKGRCYHIEPVPGEADQYICYVAYPLDLFEEGSVTNMFTSIVGNVFGFKALRALRLEDLRXPTAYIKTFQGPPHGIQVERDKLNKYGRPLLGCTIKPKLGLSAKNYGRAVFECLRGGLDFTKDDENVNSQPFMRWRDRFLFCAEALYKSQAETGEIKGHYLNATAGTCEEMIKRAVFARELGAPIVMHDYLTGGFTANTSLAHYCRDNGLLLHIHRAMHAVIDRQKNHGIHFRVLAKALRMSGGDHIHSGTVVGKLEGERDITLGFVDLLRDDFIEKDRSRGIYFTQDWVSLPGVLPVASGGIHVWHMPALTEIFGDDSVLQFGGGTLGHPWGNAPGAVANRVALEACVQARNEGRDLASEGNEIIREASKWSPELAAACEVWKEIKFEFQAMDTLDPSSDK.

2 residues coordinate substrate: Asn-89 and Thr-139. Lys-141 (proton acceptor) is an active-site residue. Lys-143 serves as a coordination point for substrate. Lys-167, Asp-169, and Glu-170 together coordinate Mg(2+). An N6-carboxylysine modification is found at Lys-167. His-260 acts as the Proton acceptor in catalysis. Residues Arg-261, His-293, and Ser-345 each coordinate substrate.

It belongs to the RuBisCO large chain family. Type I subfamily. Heterohexadecamer of 8 large chains and 8 small chains; disulfide-linked. The disulfide link is formed within the large subunit homodimers. It depends on Mg(2+) as a cofactor. The disulfide bond which can form in the large chain dimeric partners within the hexadecamer appears to be associated with oxidative stress and protein turnover.

Its subcellular location is the plastid. It is found in the chloroplast. It carries out the reaction 2 (2R)-3-phosphoglycerate + 2 H(+) = D-ribulose 1,5-bisphosphate + CO2 + H2O. The catalysed reaction is D-ribulose 1,5-bisphosphate + O2 = 2-phosphoglycolate + (2R)-3-phosphoglycerate + 2 H(+). Its function is as follows. RuBisCO catalyzes two reactions: the carboxylation of D-ribulose 1,5-bisphosphate, the primary event in carbon dioxide fixation, as well as the oxidative fragmentation of the pentose substrate in the photorespiration process. Both reactions occur simultaneously and in competition at the same active site. The sequence is that of Ribulose bisphosphate carboxylase large chain from Ligustrum vulgare (Common privet).